We begin with the raw amino-acid sequence, 662 residues long: Polyadenylate-binding protein 4 (662 aa).

Residues 1–23 form a disordered region; the sequence is MAQVQAPSSHSPPPPAVVNDGAA. 4 consecutive RRM domains span residues 46 to 124, 134 to 211, 225 to 302, and 328 to 405; these read CSLY…YSSR, GNLF…PFLR, TNVY…KAQK, and LNLY…LAQR. Composition is skewed to low complexity over residues 480 to 489 and 506 to 518; these read PMMQPGQQGP and QQPM…QMMP. Disordered regions lie at residues 480–518 and 634–662; these read PMMQ…QMMP and NQPS…NDHL. In terms of domain architecture, PABC spans 558 to 635; sequence SAGQLATSLA…ALDVLRNVNQ (78 aa). Positions 634–649 are enriched in polar residues; it reads NQPSSQGSEGNKSGSP.

This sequence belongs to the polyadenylate-binding protein type-1 family. Interacts with ERD15/CID1. Interacts with Turnip mosaic virus (TuMV) VPg-Pro.

The protein resides in the cytoplasm. It localises to the nucleus. Binds the poly(A) tail of mRNA. Appears to be an important mediator of the multiple roles of the poly(A) tail in mRNA biogenesis, stability and translation. During infection with potyvirus TuMV, acts as a potential integral component of the viral replicase complex that could play an important role in the regulation of potyviral RNA-dependent RNA polymerase (RdRp). This chain is Polyadenylate-binding protein 4 (PAB4), found in Arabidopsis thaliana (Mouse-ear cress).